The following is a 137-amino-acid chain: Fluoride-specific ion channel FluC 1 (137 aa).

A run of 4 helical transmembrane segments spans residues 4–24, 37–57, 62–82, and 100–120; these read LIYI…YYLG, LATL…TTYI, ILPA…FTTF, and IAFL…GLGY. Gly77 and Thr80 together coordinate Na(+).

This sequence belongs to the fluoride channel Fluc/FEX (TC 1.A.43) family.

It is found in the cell membrane. The catalysed reaction is fluoride(in) = fluoride(out). With respect to regulation, na(+) is not transported, but it plays an essential structural role and its presence is essential for fluoride channel function. Its function is as follows. Fluoride-specific ion channel. Important for reducing fluoride concentration in the cell, thus reducing its toxicity. The sequence is that of Fluoride-specific ion channel FluC 1 from Bacillus cereus (strain ATCC 10987 / NRS 248).